The following is a 906-amino-acid chain: Ectonucleotide pyrophosphatase/phosphodiesterase family member 1 (906 aa).

The disordered stretch occupies residues 1–25; sequence MERDGEQAGQGPRHGPAGNGRELES. Residues 1–58 are Cytoplasmic-facing; the sequence is MERDGEQAGQGPRHGPAGNGRELESPAAASLLAPMDLGEEPLEKAERARTAKDPNTYK. Serine 25 carries the post-translational modification Phosphoserine. Positions 27–34 match the Di-leucine motif motif; sequence AAASLLAP. The helical; Signal-anchor for type II membrane protein transmembrane segment at 59-79 threads the bilayer; that stretch reads VLSLVLSVCVLTTILGCIFGL. Over 80–906 the chain is Extracellular; it reads KPSCAKEVKS…THLPIFSQED (827 aa). 2 consecutive SMB domains span residues 86–126 and 127–170; these read EVKS…VEPT and HIWT…QEKK. 10 disulfide bridges follow: cysteine 90–cysteine 104, cysteine 94–cysteine 122, cysteine 102–cysteine 115, cysteine 108–cysteine 114, cysteine 131–cysteine 148, cysteine 136–cysteine 166, cysteine 146–cysteine 159, cysteine 152–cysteine 158, cysteine 177–cysteine 223, and cysteine 185–cysteine 397. Asparagine 161 is a glycosylation site (N-linked (GlcNAc...) asparagine). The interval 173–573 is phosphodiesterase; the sequence is VEEACETIDA…APNNESHGSL (401 aa). 3 residues coordinate AMP: aspartate 200, threonine 238, and asparagine 259. Zn(2+) is bound by residues aspartate 200 and threonine 238. Threonine 238 acts as the AMP-threonine intermediate in catalysis. 2 residues coordinate CMP: threonine 238 and asparagine 259. DTMP is bound by residues threonine 238 and asparagine 259. Positions 238 and 259 each coordinate GMP. At threonine 238 the chain carries Phosphothreonine. N-linked (GlcNAc...) asparagine glycosylation is present at asparagine 267. Residues leucine 272, lysine 277, and tyrosine 322 each contribute to the GMP site. Positions 277 and 322 each coordinate AMP. Residues lysine 277 and tyrosine 322 each coordinate CMP. Tyrosine 322 serves as a coordination point for dTMP. An N-linked (GlcNAc...) asparagine glycan is attached at asparagine 323. Aspartate 358 lines the AMP pocket. 4 residues coordinate Zn(2+): aspartate 358, histidine 362, aspartate 405, and histidine 406. Residue aspartate 358 participates in CMP binding. A dTMP-binding site is contributed by aspartate 358. GMP is bound at residue aspartate 358. Histidine 362 is a binding site for 2',3'-cGAMP. Histidine 406 lines the AMP pocket. A CMP-binding site is contributed by histidine 406. Histidine 406 is a dTMP binding site. Histidine 406 contacts GMP. Cystine bridges form between cysteine 413–cysteine 512, cysteine 462–cysteine 849, cysteine 596–cysteine 653, cysteine 607–cysteine 707, cysteine 609–cysteine 692, and cysteine 819–cysteine 829. A glycan (N-linked (GlcNAc...) asparagine) is linked at asparagine 459. Serine 514 serves as a coordination point for 2',3'-cGAMP. Histidine 517 provides a ligand contact to AMP. Histidine 517 contributes to the Zn(2+) binding site. A CMP-binding site is contributed by histidine 517. Histidine 517 is a binding site for dTMP. Histidine 517 provides a ligand contact to GMP. 2 N-linked (GlcNAc...) asparagine glycosylation sites follow: asparagine 567 and asparagine 624. The interval 579 to 628 is linker; sequence KPIYTPSHPKEESFLSQCPIKSVSSDLGCTCDPSIVPIMDFEKQFNLTTD. The interval 635-906 is nuclease-like domain; that stretch reads SMTVPNGRPR…THLPIFSQED (272 aa). Positions 781, 783, 785, 787, and 789 each coordinate Ca(2+).

It belongs to the nucleotide pyrophosphatase/phosphodiesterase family. Ectonucleotide pyrophosphatase/phosphodiesterase family member 1: Homodimer. Ectonucleotide pyrophosphatase/phosphodiesterase family member 1: Interacts with INSR; leading to inhibit INSR autophosphorylation and subsequent activation of INSR kinase activity. Ectonucleotide pyrophosphatase/phosphodiesterase family member 1, secreted form: Monomeric. It depends on Zn(2+) as a cofactor. Post-translationally, the secreted form is produced through cleavage at Lys-85 by intracellular processing.

The protein resides in the cell membrane. Its subcellular location is the basolateral cell membrane. It is found in the secreted. The enzyme catalyses Hydrolytically removes 5'-nucleotides successively from the 3'-hydroxy termini of 3'-hydroxy-terminated oligonucleotides.. It carries out the reaction a ribonucleoside 5'-triphosphate + H2O = a ribonucleoside 5'-phosphate + diphosphate + H(+). The catalysed reaction is ATP + H2O = AMP + diphosphate + H(+). It catalyses the reaction UTP + H2O = UMP + diphosphate + H(+). The enzyme catalyses GTP + H2O = GMP + diphosphate + H(+). It carries out the reaction CTP + H2O = CMP + diphosphate + H(+). The catalysed reaction is 2',3'-cGAMP + 2 H2O = GMP + AMP + 2 H(+). It catalyses the reaction P(1),P(4)-bis(5'-adenosyl) tetraphosphate + H2O = AMP + ATP + 2 H(+). The enzyme catalyses 3',5'-cyclic AMP + H2O = AMP + H(+). With respect to regulation, at low concentrations of ATP, a phosphorylated intermediate is formed which inhibits further hydrolysis. In terms of biological role, nucleotide pyrophosphatase that generates diphosphate (PPi) and functions in bone mineralization and soft tissue calcification by regulating pyrophosphate levels. PPi inhibits bone mineralization and soft tissue calcification by binding to nascent hydroxyapatite crystals, thereby preventing further growth of these crystals. Preferentially hydrolyzes ATP, but can also hydrolyze other nucleoside 5' triphosphates such as GTP, CTP and UTP to their corresponding monophosphates with release of pyrophosphate, as well as diadenosine polyphosphates, and also 3',5'-cAMP to AMP. May also be involved in the regulation of the availability of nucleotide sugars in the endoplasmic reticulum and Golgi, and the regulation of purinergic signaling. Inhibits ectopic joint calcification and maintains articular chondrocytes by repressing hedgehog signaling; it is however unclear whether hedgehog inhibition is direct or indirect. Appears to modulate insulin sensitivity. Also involved in melanogenesis. Also able to hydrolyze 2',3'-cGAMP (cyclic GMP-AMP), a second messenger that activates TMEM173/STING and triggers type-I interferon production. 2',3'-cGAMP degradation takes place in the lumen or extracellular space, and not in the cytosol where it is produced; the role of 2',3'-cGAMP hydrolysis is therefore unclear. Not able to hydrolyze the 2',3'-cGAMP linkage isomer 3'-3'-cGAMP. This Rattus norvegicus (Rat) protein is Ectonucleotide pyrophosphatase/phosphodiesterase family member 1.